A 351-amino-acid chain; its full sequence is UDP-3-O-acylglucosamine N-acyltransferase 1 (351 aa).

Histidine 237 (proton acceptor) is an active-site residue.

This sequence belongs to the transferase hexapeptide repeat family. LpxD subfamily. As to quaternary structure, homotrimer.

It catalyses the reaction a UDP-3-O-[(3R)-3-hydroxyacyl]-alpha-D-glucosamine + a (3R)-hydroxyacyl-[ACP] = a UDP-2-N,3-O-bis[(3R)-3-hydroxyacyl]-alpha-D-glucosamine + holo-[ACP] + H(+). It participates in bacterial outer membrane biogenesis; LPS lipid A biosynthesis. Its function is as follows. Catalyzes the N-acylation of UDP-3-O-acylglucosamine using 3-hydroxyacyl-ACP as the acyl donor. Is involved in the biosynthesis of lipid A, a phosphorylated glycolipid that anchors the lipopolysaccharide to the outer membrane of the cell. This is UDP-3-O-acylglucosamine N-acyltransferase 1 from Legionella pneumophila (strain Paris).